Here is a 739-residue protein sequence, read N- to C-terminus: NAD(P)H-quinone oxidoreductase subunit 5, chloroplastic (739 aa).

Helical transmembrane passes span 9 to 29 (WIIP…LLLV), 39 to 59 (IWAF…ADLA), 89 to 109 (IDPL…MVLI), 125 to 145 (FAYM…SNLI), 147 to 167 (IYIF…FWFT), 185 to 205 (GDFG…SFEF), 224 to 244 (LFAA…SAQF), 258 to 278 (TPIS…FLVA), 280 to 300 (LLPL…IGII), 327 to 347 (LGYI…FHLI), 354 to 374 (ALLF…VGYS), 396 to 416 (TTFF…CFWS), 425 to 445 (WLYS…TAFY), 544 to 564 (LFPM…GIPF), 603 to 623 (IYSV…YGSV), and 719 to 739 (YIFL…FFSF).

It belongs to the complex I subunit 5 family. In terms of assembly, NDH is composed of at least 16 different subunits, 5 of which are encoded in the nucleus.

It localises to the plastid. The protein localises to the chloroplast thylakoid membrane. The catalysed reaction is a plastoquinone + NADH + (n+1) H(+)(in) = a plastoquinol + NAD(+) + n H(+)(out). The enzyme catalyses a plastoquinone + NADPH + (n+1) H(+)(in) = a plastoquinol + NADP(+) + n H(+)(out). Its function is as follows. NDH shuttles electrons from NAD(P)H:plastoquinone, via FMN and iron-sulfur (Fe-S) centers, to quinones in the photosynthetic chain and possibly in a chloroplast respiratory chain. The immediate electron acceptor for the enzyme in this species is believed to be plastoquinone. Couples the redox reaction to proton translocation, and thus conserves the redox energy in a proton gradient. The polypeptide is NAD(P)H-quinone oxidoreductase subunit 5, chloroplastic (ndhF) (Acorus calamus var. americanus (American sweet flag)).